A 160-amino-acid polypeptide reads, in one-letter code: Cytochrome b6-f complex subunit 4 (160 aa).

3 helical membrane passes run 36–56 (LLYI…GLAV), 95–115 (LLGI…PFIE), and 131–151 (SLFL…CLPI).

This sequence belongs to the cytochrome b family. PetD subfamily. In terms of assembly, the 4 large subunits of the cytochrome b6-f complex are cytochrome b6, subunit IV (17 kDa polypeptide, PetD), cytochrome f and the Rieske protein, while the 4 small subunits are PetG, PetL, PetM and PetN. The complex functions as a dimer.

The protein resides in the cellular thylakoid membrane. Its function is as follows. Component of the cytochrome b6-f complex, which mediates electron transfer between photosystem II (PSII) and photosystem I (PSI), cyclic electron flow around PSI, and state transitions. The chain is Cytochrome b6-f complex subunit 4 from Prochlorococcus marinus (strain NATL2A).